We begin with the raw amino-acid sequence, 280 residues long: Ribosomal RNA small subunit methyltransferase A (280 aa).

S-adenosyl-L-methionine contacts are provided by H13, L15, G40, E61, D85, and N106. The segment at 258 to 280 (RPPADVEDANAPHTEQGKGDNSQ) is disordered.

It belongs to the class I-like SAM-binding methyltransferase superfamily. rRNA adenine N(6)-methyltransferase family. RsmA subfamily.

Its subcellular location is the cytoplasm. The catalysed reaction is adenosine(1518)/adenosine(1519) in 16S rRNA + 4 S-adenosyl-L-methionine = N(6)-dimethyladenosine(1518)/N(6)-dimethyladenosine(1519) in 16S rRNA + 4 S-adenosyl-L-homocysteine + 4 H(+). Specifically dimethylates two adjacent adenosines (A1518 and A1519) in the loop of a conserved hairpin near the 3'-end of 16S rRNA in the 30S particle. May play a critical role in biogenesis of 30S subunits. The protein is Ribosomal RNA small subunit methyltransferase A of Alcanivorax borkumensis (strain ATCC 700651 / DSM 11573 / NCIMB 13689 / SK2).